Reading from the N-terminus, the 393-residue chain is CCCH-type zinc finger protein oma-2 (393 aa).

The disordered stretch occupies residues 1-26; sequence MDMLKENVIQNNEARTESSVEPSHPD. Basic and acidic residues predominate over residues 14 to 26; sequence ARTESSVEPSHPD. 2 C3H1-type zinc fingers span residues 105 to 133 and 147 to 175; these read SYKT…HGEE and KYRT…HPDN. Disordered stretches follow at residues 227 to 251 and 311 to 340; these read TPDE…RYEL and KQST…LTAA. The segment covering 313–340 has biased composition (low complexity); the sequence is STPGGVSGYSSSGSTPSQDSDSSPLTAA. T327 bears the Phosphothreonine; by GSK3 mark.

Exclusively expressed in the hermaphrodite gonad. Expression only in cellulized oocytes. Widely distributed throughout gonadal oocytes from the mitotic stage to the developing diakinesis stage.

The protein resides in the cytoplasm. It is found in the cytoplasmic granule. It localises to the cytoskeleton. The protein localises to the microtubule organizing center. Its subcellular location is the centrosome. Functionally, zinc-finger RNA-binding protein that binds to 5'-UA[AU]-3' motifs in the 3'-UTR of maternal mRNAs to suppress translation in oocytes and embryos. Acts redundantly with oma-1 to control the temporal expression and distribution of maternal proteins and thereby promote meiotic progression, oocyte maturation, fertilization and embryonic development. Also, together with oma-1, is involved in P-granule distribution during embryonic development. This Caenorhabditis elegans protein is CCCH-type zinc finger protein oma-2.